The primary structure comprises 326 residues: Methionine import ATP-binding protein MetN (326 aa).

The ABC transporter domain occupies 1–226; that stretch reads MVFYTIGPQT…PQQPITRQFV (226 aa). 23-30 is an ATP binding site; it reads GYSGAGKS.

It belongs to the ABC transporter superfamily. Methionine importer (TC 3.A.1.24) family. In terms of assembly, the complex is composed of two ATP-binding proteins (MetN), two transmembrane proteins (MetI) and a solute-binding protein (MetQ).

Its subcellular location is the cell inner membrane. It carries out the reaction L-methionine(out) + ATP + H2O = L-methionine(in) + ADP + phosphate + H(+). It catalyses the reaction D-methionine(out) + ATP + H2O = D-methionine(in) + ADP + phosphate + H(+). In terms of biological role, part of the ABC transporter complex MetNIQ involved in methionine import. Responsible for energy coupling to the transport system. This chain is Methionine import ATP-binding protein MetN, found in Erwinia pyrifoliae (strain DSM 12162 / Ep1/96).